Here is a 225-residue protein sequence, read N- to C-terminus: tRNA (guanine-N(7)-)-methyltransferase (225 aa).

4 residues coordinate S-adenosyl-L-methionine: Glu56, Glu81, Asp108, and Asp131. Asp131 is a catalytic residue. Substrate contacts are provided by residues Lys135, Asp167, and 204–207; that span reads TKFE.

Belongs to the class I-like SAM-binding methyltransferase superfamily. TrmB family.

It catalyses the reaction guanosine(46) in tRNA + S-adenosyl-L-methionine = N(7)-methylguanosine(46) in tRNA + S-adenosyl-L-homocysteine. It functions in the pathway tRNA modification; N(7)-methylguanine-tRNA biosynthesis. Its function is as follows. Catalyzes the formation of N(7)-methylguanine at position 46 (m7G46) in tRNA. The chain is tRNA (guanine-N(7)-)-methyltransferase from Legionella pneumophila (strain Lens).